Reading from the N-terminus, the 695-residue chain is Protein-glutamine gamma-glutamyltransferase 2 (695 aa).

Residues Cys272, His332, and Asp355 contribute to the active site. Residues Asn395, Asp397, Glu434, Glu444, and Glu449 each coordinate Ca(2+). GTP-binding positions include 476–482 (SIKHAQP) and 578–581 (ANIP).

The protein belongs to the transglutaminase superfamily. Transglutaminase family. As to quaternary structure, monomer. The cofactor is Ca(2+).

It localises to the cytoplasm. The protein localises to the cytosol. The protein resides in the nucleus. It is found in the chromosome. Its subcellular location is the secreted. It localises to the extracellular space. The protein localises to the extracellular matrix. The protein resides in the cell membrane. It is found in the mitochondrion. It catalyses the reaction L-glutaminyl-[protein] + L-lysyl-[protein] = [protein]-L-lysyl-N(6)-5-L-glutamyl-[protein] + NH4(+). It carries out the reaction L-glutaminyl-[protein] + serotonin = 5-serotonyl-L-glutamyl-[protein] + NH4(+). The catalysed reaction is L-glutaminyl-[protein] + dopamine = 5-dopaminyl-L-glutamyl-[protein] + NH4(+). The enzyme catalyses L-glutaminyl-[protein] + histamine = 5-histaminyl-L-glutamyl-[protein] + NH4(+). It catalyses the reaction L-glutaminyl-[protein] + (R)-noradrenaline = 5-(R)-noradrenalinyl-L-glutamyl-[protein] + NH4(+). It carries out the reaction L-glutaminyl-[protein] + H2O = L-glutamyl-[protein] + NH4(+). With respect to regulation, acyltransferase activity is regulated by the binding of GTP and Ca(2+): inactivated by GTP, which stabilizes its closed structure, thereby obstructing the accessibility of substrates to the active sites. In contrast, Ca(2+) acts as a cofactor by inducing conformational change to the active open form. In absence of Ca(2+), Mg(2+) may bind Ca(2+)-binding sites, promoting GTP-binding and subsequent inhibition of the acyltransferase activity. Functionally, calcium-dependent acyltransferase that catalyzes the formation of covalent bonds between peptide-bound glutamine and various primary amines, such as gamma-amino group of peptide-bound lysine, or mono- and polyamines, thereby producing cross-linked or aminated proteins, respectively. Involved in many biological processes, such as bone development, angiogenesis, wound healing, cellular differentiation, chromatin modification and apoptosis. Acts as a protein-glutamine gamma-glutamyltransferase by mediating the cross-linking of proteins: under physiological conditions, the protein cross-linking activity is inhibited by GTP; inhibition is relieved by Ca(2+) in response to various stresses. When secreted, catalyzes cross-linking of proteins of the extracellular matrix, resulting in the formation of scaffolds. Plays a key role during apoptosis, both by (1) promoting the cross-linking of cytoskeletal proteins resulting in condensation of the cytoplasm, and by (2) mediating cross-linking proteins of the extracellular matrix, resulting in the irreversible formation of scaffolds that stabilize the integrity of the dying cells before their clearance by phagocytosis, thereby preventing the leakage of harmful intracellular components. In addition to protein cross-linking, can use different monoamine substrates to catalyze a vast array of protein post-translational modifications: mediates aminylation of serotonin, dopamine, noradrenaline or histamine into glutamine residues of target proteins to generate protein serotonylation, dopaminylation, noradrenalinylation or histaminylation, respectively. Mediates protein serotonylation of small GTPases during activation and aggregation of platelets, leading to constitutive activation of these GTPases. Plays a key role in chromatin organization by mediating serotonylation and dopaminylation of histone H3. Catalyzes serotonylation of 'Gln-5' of histone H3 (H3Q5ser) during serotonergic neuron differentiation, thereby facilitating transcription. Acts as a mediator of neurotransmission-independent role of nuclear dopamine in ventral tegmental area (VTA) neurons: catalyzes dopaminylation of 'Gln-5' of histone H3 (H3Q5dop), thereby regulating relapse-related transcriptional plasticity in the reward system. Also acts as a protein deamidase by mediating the side chain deamidation of specific glutamine residues of proteins to glutamate. May also act as an isopeptidase cleaving the previously formed cross-links. Also able to participate in signaling pathways independently of its acyltransferase activity: acts as a signal transducer in alpha-1 adrenergic receptor-mediated stimulation of phospholipase C-delta (PLCD) activity and is required for coupling alpha-1 adrenergic agonists to the stimulation of phosphoinositide lipid metabolism. This Pagrus major (Red sea bream) protein is Protein-glutamine gamma-glutamyltransferase 2.